A 334-amino-acid polypeptide reads, in one-letter code: Inositol 2-dehydrogenase (334 aa).

This sequence belongs to the Gfo/Idh/MocA family. As to quaternary structure, homotetramer.

It catalyses the reaction myo-inositol + NAD(+) = scyllo-inosose + NADH + H(+). In terms of biological role, involved in the oxidation of myo-inositol (MI) to 2-keto-myo-inositol (2KMI or 2-inosose). The chain is Inositol 2-dehydrogenase from Cereibacter sphaeroides (strain ATCC 17029 / ATH 2.4.9) (Rhodobacter sphaeroides).